A 615-amino-acid polypeptide reads, in one-letter code: DNA mismatch repair protein MutL (615 aa).

Residues 362-397 (HFAEPAVREPVAPRYTPAPASGSRPAAPWPNAQPGY) form a disordered region. Over residues 378–391 (PAPASGSRPAAPWP) the composition is skewed to low complexity.

It belongs to the DNA mismatch repair MutL/HexB family.

Its function is as follows. This protein is involved in the repair of mismatches in DNA. It is required for dam-dependent methyl-directed DNA mismatch repair. May act as a 'molecular matchmaker', a protein that promotes the formation of a stable complex between two or more DNA-binding proteins in an ATP-dependent manner without itself being part of a final effector complex. In Escherichia coli O17:K52:H18 (strain UMN026 / ExPEC), this protein is DNA mismatch repair protein MutL.